Reading from the N-terminus, the 30-residue chain is Hementerin (30 aa).

Requires Ca(2+) as cofactor.

Its subcellular location is the secreted. Its activity is regulated as follows. Fibrino(geno)lytic activity inhibited by EDTA but not by PMSF, E-64, 6-AHA and aprotinin. Functionally, cleaves fibrinogen Aalpha (FGA), gamma (FGG) and Bbeta (FGB) chains. Degrades cross-linked fibrin. Has no amidolytic, plasminogenolytic or caseinolytic activity. Inhibits platelet aggregation induced by collagen (IC(50)=7.5ug/ml) and various other agonists, presumably via activation of a nitridergic pathway. Inhibition is accompanied by reduced ATP release from and surface expression of SELP and CD63 on platelets as well as increased intracellular levels of Ca(2+), cGMP and nitric oxide synthase activity. The protein is Hementerin of Haementeria depressa (Leech).